We begin with the raw amino-acid sequence, 316 residues long: tRNA dimethylallyltransferase (316 aa).

Residue 9–16 (GPTASGKS) participates in ATP binding. A substrate-binding site is contributed by 11–16 (TASGKS). 2 interaction with substrate tRNA regions span residues 34–37 (DSMQ) and 158–162 (QRLAR).

This sequence belongs to the IPP transferase family. Monomer. Mg(2+) serves as cofactor.

It catalyses the reaction adenosine(37) in tRNA + dimethylallyl diphosphate = N(6)-dimethylallyladenosine(37) in tRNA + diphosphate. Its function is as follows. Catalyzes the transfer of a dimethylallyl group onto the adenine at position 37 in tRNAs that read codons beginning with uridine, leading to the formation of N6-(dimethylallyl)adenosine (i(6)A). The sequence is that of tRNA dimethylallyltransferase from Hyphomonas neptunium (strain ATCC 15444).